Consider the following 248-residue polypeptide: NADP-dependent 3-hydroxy acid dehydrogenase YdfG (248 aa).

NADP(+)-binding positions include G7–F12, R32–R33, D54–V55, and N81. S134 lines the substrate pocket. NADP(+) is bound by residues Y147, K151, and P177–F185. Y147 functions as the Proton acceptor in the catalytic mechanism.

Belongs to the short-chain dehydrogenases/reductases (SDR) family. Homotetramer.

It carries out the reaction 3-hydroxypropanoate + NADP(+) = 3-oxopropanoate + NADPH + H(+). The catalysed reaction is L-allo-threonine + NADP(+) = aminoacetone + CO2 + NADPH. In terms of biological role, NADP-dependent dehydrogenase with broad substrate specificity acting on 3-hydroxy acids. Catalyzes the NADP-dependent oxidation of L-allo-threonine to L-2-amino-3-keto-butyrate, which is spontaneously decarboxylated into aminoacetone. Also acts on D-threonine, L-serine, D-serine, D-3-hydroxyisobutyrate, L-3-hydroxyisobutyrate, D-glycerate and L-glycerate. Able to catalyze the reduction of the malonic semialdehyde to 3-hydroxypropionic acid. YdfG is apparently supplementing RutE, the presumed malonic semialdehyde reductase involved in pyrimidine degradation since both are able to detoxify malonic semialdehyde. The sequence is that of NADP-dependent 3-hydroxy acid dehydrogenase YdfG from Escherichia coli O157:H7.